A 62-amino-acid polypeptide reads, in one-letter code: Conotoxin Pn-B02 (62 aa).

A signal peptide spans 1 to 19 (MRCLPVFIILLLLIASAPS). Positions 20 to 49 (FDALPKTEDNVPLSSFHDNLKRTRRIHLNI) are excised as a propeptide. An Alanine amide modification is found at alanine 61.

Belongs to the conotoxin T superfamily. In terms of processing, contains 2 disulfide bonds that can be either 'C1-C3, C2-C4' or 'C1-C4, C2-C3', since these disulfide connectivities have been observed for conotoxins with cysteine framework V (for examples, see AC P0DQQ7 and AC P81755). In terms of tissue distribution, expressed by the venom duct.

It localises to the secreted. This is Conotoxin Pn-B02 from Conus pennaceus (Feathered cone).